The primary structure comprises 309 residues: MPKVRTKDLIEQFQLELVSGEEGIHRPIDTSDLSRPGIEMAGFFTYYPADRVQLLGKTELTFFDTLTTEQKQERMKALCTEETPCIIVTRNQDVPDELLQASRESGVPLLRSAQTTTRLSSRLTNYLEGKLAPTTAVHGVLVDIYGVGVLITGQSGVGKSETALELVKRGHRLVADDSVEIRQEDEDTLVGSSPDLIEHLLEIRGLGIINVMTLFGAGAVRNYKRITLVINLEIWDQKKNYDRLGLDEEKMKIIDTELTKITLPVRPGRNLAVIIEVAAMNFRLKRMGVNAAQQFSERLMSAIELGNQE.

Active-site residues include histidine 138 and lysine 159. 153–160 is a binding site for ATP; that stretch reads GQSGVGKS. A Mg(2+)-binding site is contributed by serine 160. Aspartate 177 acts as the Proton acceptor; for phosphorylation activity. Proton donor; for dephosphorylation activity in catalysis. Residues 201-210 form an important for the catalytic mechanism of both phosphorylation and dephosphorylation region; the sequence is LEIRGLGIIN. Glutamate 202 contributes to the Mg(2+) binding site. Residue arginine 243 is part of the active site. The tract at residues 264-269 is important for the catalytic mechanism of dephosphorylation; the sequence is PVRPGR.

It belongs to the HPrK/P family. Homohexamer. It depends on Mg(2+) as a cofactor.

The catalysed reaction is [HPr protein]-L-serine + ATP = [HPr protein]-O-phospho-L-serine + ADP + H(+). It carries out the reaction [HPr protein]-O-phospho-L-serine + phosphate + H(+) = [HPr protein]-L-serine + diphosphate. Catalyzes the ATP- as well as the pyrophosphate-dependent phosphorylation of a specific serine residue in HPr, a phosphocarrier protein of the phosphoenolpyruvate-dependent sugar phosphotransferase system (PTS). HprK/P also catalyzes the pyrophosphate-producing, inorganic phosphate-dependent dephosphorylation (phosphorolysis) of seryl-phosphorylated HPr (P-Ser-HPr). The two antagonistic activities of HprK/P are regulated by several intracellular metabolites, which change their concentration in response to the absence or presence of rapidly metabolisable carbon sources (glucose, fructose, etc.) in the growth medium. Also phosphorylates/dephosphorylates the HPr-like catabolite repression protein crh on a specific serine residue. Therefore, by controlling the phosphorylation state of HPr and crh, HPrK/P is a sensor enzyme that plays a major role in the regulation of carbon metabolism and sugar transport: it mediates carbon catabolite repression (CCR), and regulates PTS-catalyzed carbohydrate uptake and inducer exclusion. In Bacillus mycoides (strain KBAB4) (Bacillus weihenstephanensis), this protein is HPr kinase/phosphorylase.